We begin with the raw amino-acid sequence, 1396 residues long: DNA-directed RNA polymerase subunit beta' (1396 aa).

Zn(2+)-binding residues include C73, C75, C88, and C91. Residues D467, D469, and D471 each coordinate Mg(2+). The Zn(2+) site is built by C817, C891, C898, and C901.

It belongs to the RNA polymerase beta' chain family. The RNAP catalytic core consists of 2 alpha, 1 beta, 1 beta' and 1 omega subunit. When a sigma factor is associated with the core the holoenzyme is formed, which can initiate transcription. The cofactor is Mg(2+). Zn(2+) serves as cofactor.

It carries out the reaction RNA(n) + a ribonucleoside 5'-triphosphate = RNA(n+1) + diphosphate. DNA-dependent RNA polymerase catalyzes the transcription of DNA into RNA using the four ribonucleoside triphosphates as substrates. In Orientia tsutsugamushi (strain Ikeda) (Rickettsia tsutsugamushi), this protein is DNA-directed RNA polymerase subunit beta'.